We begin with the raw amino-acid sequence, 202 residues long: Keratin-associated protein 5-10 (202 aa).

Repeat copies occupy residues 48 to 51 (CCKP), 54 to 57 (CCVP), 144 to 147 (CCKP), 162 to 165 (CCNP), 172 to 175 (CCVP), 182 to 185 (CCKP), and 192 to 195 (CCVP). The tract at residues 48–195 (CCKPVCCCVP…CCCQSSCCVP (148 aa)) is 7 X 4 AA repeats of C-C-X-P.

This sequence belongs to the KRTAP type 5 family. As to quaternary structure, interacts with hair keratins. As to expression, expressed in hair root but not in skin. Expressed also in brain and skeletal muscle.

In the hair cortex, hair keratin intermediate filaments are embedded in an interfilamentous matrix, consisting of hair keratin-associated protein (KRTAP), which are essential for the formation of a rigid and resistant hair shaft through their extensive disulfide bond cross-linking with abundant cysteine residues of hair keratins. The matrix proteins include the high-sulfur and high-glycine-tyrosine keratins. This is Keratin-associated protein 5-10 (KRTAP5-10) from Homo sapiens (Human).